The following is a 102-amino-acid chain: MDKVVRMSSEKGVVIFSKSSCCMSYAVQVLFQDLGVHPTVHEIDKDPECREIEKALMRLGCSTPVPAIFVGGKLIGSTNEVMSLHLSGSLVPLVKPFQANLC.

The region spanning 1-101 is the Glutaredoxin domain; it reads MDKVVRMSSE…PLVKPFQANL (101 aa). Residue cysteine 21 coordinates [2Fe-2S] cluster.

This sequence belongs to the glutaredoxin family. CC-type subfamily.

The protein resides in the cytoplasm. May only reduce GSH-thiol disulfides, but not protein disulfides. The chain is Monothiol glutaredoxin-S9 (GRXS9) from Arabidopsis thaliana (Mouse-ear cress).